Consider the following 821-residue polypeptide: MFNWRAIYNKILYLLLKIVVRSHIIPPKLLAEICLDIQEPMMYVLPYNSKCDLLTLRILCIQYQLPDPLKPIFIXGVRFPRYLFIDQSCHIRSDVTKQQQYGRILHNFITLYRHNSCSNIQILPVWVMFGRCPGKESYKNKKTTSIQFFCLLKKIINVIWLGRDSFIYFSPIGSIPISYIANSNYTINSIMILKLFRLGRIHFLRQKRIAIGPSLLVRKHLFEKLLASQTITKLVEDEARSKKISIKQAQQKALVIIEEIAADFSYETIRLSDRVLSWIWNMLYQGLYVCNADRVRKLAEKGHEIIYLPCHRSHMDYLLLSYILYHEGLVIPYIAAGINLNFWPAGQIFRKLGAFFIHRTFKGHQKLYSAIFREYLYQLFNGGYSVAYFLEGSRSRTGRLQAPKTGTLTITIQSMLHLGKKKPIILVPVYISYEHVIEVASYTKELYGVVKKKEGLIHMISGLRNLRNLGRGYINFGEPLPLLTWLNQQVPQWQDDINSIEGNRPNWLALTVDYLAVTIMTRINNAVAVNAMNLCSSIILASRQYSCSSIVITRTRLLSQLKCYLELLRNVPYDAEVTVPNVTPEDLFQHLITLNQFTIKNNSIIYVSSEKTALITYYRNNIQHLFILPSLLAIIIIAQPGISRKLIHQKLLSLYPLLKVELFMRFSYQELPHVIDLMITELHRQDILYEQQTKIYPVPKRMDELQLLAASGGRETLYRYAITFSLLCSYTRINRYSLEKQSIIIAQHLSKIHSIYALEFIDKTIFSTLITTLRHEGYLSDSGEIHASQAKEIYKFLSALISPEIQTSITNALYHIKTVVN.

An HXXXXD motif motif is present at residues 310 to 315; sequence CHRSHM.

It belongs to the GPAT/DAPAT family.

Its subcellular location is the cell membrane. It catalyses the reaction sn-glycerol 3-phosphate + an acyl-CoA = a 1-acyl-sn-glycero-3-phosphate + CoA. It functions in the pathway phospholipid metabolism; CDP-diacylglycerol biosynthesis; CDP-diacylglycerol from sn-glycerol 3-phosphate: step 1/3. This chain is Glycerol-3-phosphate acyltransferase, found in Baumannia cicadellinicola subsp. Homalodisca coagulata.